We begin with the raw amino-acid sequence, 366 residues long: Peptide chain release factor 2 (366 aa).

At Gln246 the chain carries N5-methylglutamine.

The protein belongs to the prokaryotic/mitochondrial release factor family. Methylated by PrmC. Methylation increases the termination efficiency of RF2.

Its subcellular location is the cytoplasm. Its function is as follows. Peptide chain release factor 2 directs the termination of translation in response to the peptide chain termination codons UGA and UAA. This chain is Peptide chain release factor 2, found in Frankia casuarinae (strain DSM 45818 / CECT 9043 / HFP020203 / CcI3).